The sequence spans 377 residues: Nitric oxide reductase FlRd-NAD(+) reductase (377 aa).

This sequence belongs to the FAD-dependent oxidoreductase family. FAD is required as a cofactor.

It is found in the cytoplasm. The catalysed reaction is 2 reduced [nitric oxide reductase rubredoxin domain] + NAD(+) + H(+) = 2 oxidized [nitric oxide reductase rubredoxin domain] + NADH. It participates in nitrogen metabolism; nitric oxide reduction. Its function is as follows. One of at least two accessory proteins for anaerobic nitric oxide (NO) reductase. Reduces the rubredoxin moiety of NO reductase. The protein is Nitric oxide reductase FlRd-NAD(+) reductase of Escherichia coli O157:H7.